Here is a 660-residue protein sequence, read N- to C-terminus: E3 ubiquitin-protein ligase ORTHRUS 3 (660 aa).

The PHD-type zinc-finger motif lies at 12–63; sequence EGVCMRCKSMPPPEESLTCGTCVTPWHVSCLLSPPETLSATLQWLCPDCSGE. The interval 107–129 is disordered; that stretch reads QLLSGKGVVDEDDEEEKKKTSKG. Residues 141–197 form an RING-type 1 zinc finger; that stretch reads CSFCMQSLQKPVSVRVLFALALMLVWFLESTPCGHNACLKCFLKWMGQGHRSCGTCR. The YDG domain occupies 285-434; sequence VRNQGLLVGE…CRFLFVRCDN (150 aa). An RING-type 2 zinc finger spans residues 528–585; sequence CQICQKVMTNPVTTPCAHNFCKACLESKFAGTALVRERGSGGRKLRSQKSVMKCPCCP. Residues 593–622 adopt a coiled-coil conformation; it reads QNPQVNREVAEVIEKLKKQEEEENAKSLDE. Basic and acidic residues-rich tracts occupy residues 610-621 and 637-646; these read KQEEEENAKSLD and QPKKRIKLDT. A disordered region spans residues 610–660; the sequence is KQEEEENAKSLDEGQCSGTSHEEEDDEQPKKRIKLDTDAEVSATVVESDMK.

Its subcellular location is the nucleus. It catalyses the reaction S-ubiquitinyl-[E2 ubiquitin-conjugating enzyme]-L-cysteine + [acceptor protein]-L-lysine = [E2 ubiquitin-conjugating enzyme]-L-cysteine + N(6)-ubiquitinyl-[acceptor protein]-L-lysine.. The protein operates within protein modification; protein ubiquitination. Functionally, E3 ubiquitin-protein ligase. May participate in CpG methylation-dependent transcriptional regulation. In Arabidopsis thaliana (Mouse-ear cress), this protein is E3 ubiquitin-protein ligase ORTHRUS 3 (ORTH3).